Here is a 357-residue protein sequence, read N- to C-terminus: NAD-dependent protein deacetylase HST2 (357 aa).

The residue at position 2 (Ser2) is an N-acetylserine. The Deacetylase sirtuin-type domain maps to 5–284 (TASTEMSVRK…EQLVEELGWQ (280 aa)). NAD(+)-binding positions include 32-52 (GAGI…TGLY) and 115-118 (QNID). His135 acts as the Proton acceptor in catalysis. Cys143, Cys146, Cys170, and Cys173 together coordinate Zn(2+). NAD(+) is bound by residues 223–225 (GTS), 248–250 (NLE), and Ser270. Residues 317–329 (LDQSEHESADKKD) show a composition bias toward basic and acidic residues. The tract at residues 317 to 357 (LDQSEHESADKKDKKLQRLNGHDSDEDGASNSSSSQKAAKE) is disordered. At Ser340 the chain carries Phosphoserine.

It belongs to the sirtuin family. Class I subfamily. As to quaternary structure, homotrimer. Monomer. Homotrimeric in its unliganded state. Undergoes a trimer-monomer transition upon acetyl-lysine substrate binding. Zn(2+) is required as a cofactor.

It localises to the cytoplasm. The protein resides in the nucleus. The catalysed reaction is N(6)-acetyl-L-lysyl-[protein] + NAD(+) + H2O = 2''-O-acetyl-ADP-D-ribose + nicotinamide + L-lysyl-[protein]. Its activity is regulated as follows. Inhibited by ADP-ribose and nicotinamide. Its function is as follows. NAD-dependent histone deacetylase that is involved in nuclear silencing events. Derepresses subtelomeric silencing and increases repression in nucleolar (rDNA) silencing. Its function is negatively regulated by active nuclear export. In Saccharomyces cerevisiae (strain ATCC 204508 / S288c) (Baker's yeast), this protein is NAD-dependent protein deacetylase HST2 (HST2).